The chain runs to 1074 residues: Fibrous sheath CABYR-binding protein (1074 aa).

The disordered stretch occupies residues 1–73 (MEECEEPEEP…SKDNYSRKEY (73 aa)). A phosphoserine mark is found at serine 25, serine 57, serine 186, and serine 275. Disordered regions lie at residues 272–294 (QAPS…KDVV) and 317–343 (LVQG…SELP). Positions 274–290 (PSPAEETSAAETATTTA) are enriched in low complexity. Serine 365 is subject to Phosphoserine. Disordered regions lie at residues 437-789 (VSAD…PLES) and 818-982 (GVPA…PLKT). The span at 448-467 (PPSAEDASEEVASSEVLPPS) shows a compositional bias: low complexity. The span at 528–544 (VLPPPAEEAPAEVPPPL) shows a compositional bias: pro residues. The segment covering 558 to 575 (EEGPAEVPLAPAEEVPAE) has biased composition (low complexity). Pro residues-rich tracts occupy residues 576 to 592 (FLPP…PPPL) and 673 to 688 (PLPP…PPPA). The span at 689–720 (TEEAPVEVLPPATEEAPVEVLPPATEEAPVEV) shows a compositional bias: low complexity. Serine 1020 is subject to Phosphoserine. Residues 1026 to 1054 (SEKELESTTLTSDKMSEGIDSVPEDVSGT) form a disordered region.

As to quaternary structure, interacts with CABYR. Interacts with ROPN1 and ROPN1L; the interaction increases upon spermatozoa capacitation conditions. In terms of processing, phosphorylated by PKA upon spermatozoa capacitation conditions. Expression is restricted to testis and epididymis, expressed by spermatozoa.

The protein localises to the cell projection. The protein resides in the cilium. Its subcellular location is the flagellum. In terms of biological role, may be involved in the later stages of fibrous sheath biogenesis and spermatozoa capacitation. Inhibits ROPN1 and ROPN1L SUMOylation. Binds calcium. The polypeptide is Fibrous sheath CABYR-binding protein (Mus musculus (Mouse)).